We begin with the raw amino-acid sequence, 532 residues long: MEIFESFGIEGEVTKQWEPATDEILWCRNESGTLSRMERFRNEPPVGVKWTHGTLQQGRVEEIMKKRITEISGVEVEYSTELSDLTINTRESSNSKASACSVTIRSVADDQEAHRSSETIRARYIIGADGGRSSIRDLMGVAMEGTKGTAIWGVMDILGGSDFPDFGATSVVRSDSDGAVDFVRREEGLTRIYVELNKCAAGWEALERDTITPELILEKCRYIIRPYKLEVDYVEWWSSFTVWQRLSKSMIVHDRVFLVGDAVHTHSPLCGMGMNTGIQDSFNLGWKLAGVVQGQLNYDILQTYETERRPVAEALLDTDRTVLDLFHAPLGPEAEALLAKVPALQVYLGGRGICYHESVLTCRLAQTLGDLTAGECLPDVTVFDYATGRPSSTHSWIKGNGGWAIIVWAGDVSRPSQMNLVQSLSRDMIELRDSLGKSGSMIDFFLIHCSAWPSVELADFPPLFFPTTKTIGRPNGRIFVDEKAVYDGLHISRAEGGVAIVRPDKHIAWAGGLQEVDSLQRYLRQVFRPQPE.

Residues 191–193 and Asp-261 contribute to the FAD site; that span reads RIY.

Belongs to the PheA/TfdB FAD monooxygenase family.

The protein operates within secondary metabolite biosynthesis. In terms of biological role, FAD-dependent monooxygenase; part of the gene cluster that mediates the biosynthesis of hancockiamides, an unusual new family of N-cinnamoylated piperazines. The NRPS hkm10 and the NmrA-like reductase hkm9 are proposed to convert two molecules of L-Phe to the intermediary piperazine called xenocockiamide A. Xenocockiamide A is then converted to hancockiamide D via a series of hydroxylations and O-methylations. The tyrosinase hkm6 may catalyze an aromatic hydroxylation, then the 2-oxoglutarate-dependent Fe(II) dioxygenase hkm4 and the FAD-dependent phenol hydroxylase hkm7 may catalyze consecutive hydroxylations to install 2 more hydroxy groups, and the methyltransferase hkm8 probably catalyzes two methylations using 2 molecules of S-adenosyl-L-methionine (SAM). The NRPS hkm11 activates and transfers trans-cinnamate supplied by the PAL hkm12 to hancockiamide D and produces hancockiamide A. NRPS Hkm11 has the flexibility to tolerate the bulky hancockiamide G as a substrate and the absence of the acetyl-transferase hkm3 opens up the opportunity for hkm11 to introduce a second N-cinnamoyl moiety. The cytochrome P450 monooxygenase hkm5 catalyzes the methylenedioxy bridge formation, converting hancockiamide A into hancockiamide G. Hkm5 can also convert hancockiamide B into hancockiamide C, and hancockiamide D into hancockiamide H. The N-acetyltransferase hkm3 finally transfers an acetyl group to 1-N of piperazine, converting hancockiamide A into hancockiamide B and hancockiamide G into hancockiamide C. The chain is FAD-dependent monooxygenase hkm7 from Aspergillus hancockii.